The primary structure comprises 1223 residues: Rho family-interacting cell polarization regulator 1 (1223 aa).

Serine 22 is modified (phosphoserine). A coiled-coil region spans residues 89–114 (LTAYLEVHQQEQEKLQGQIRESKRNS). 2 positions are modified to phosphoserine: serine 349 and serine 351. A Phosphothreonine modification is found at threonine 355. The tract at residues 375 to 411 (NGTAWSLSSESSDDSSSPQLSGTARHSPAPRPLVQQP) is disordered. The span at 380–395 (SLSSESSDDSSSPQLS) shows a compositional bias: low complexity. A phosphoserine mark is found at serine 456 and serine 459. 2 disordered regions span residues 475–769 (ESLA…APQH) and 856–889 (FLNEDEDEDNDVPGDRPPSSPEAGAEDSIDSPSA). Composition is skewed to low complexity over residues 505–523 (GHSATSSTLGTTGSVPTST) and 546–564 (PGPTHTTTGSTYSAITTTH). Polar residues predominate over residues 565-592 (SAPSPLTHTTTGSTHKPIISTLTTTGPT). 2 stretches are compositionally biased toward low complexity: residues 601–650 (TTTS…PTPS) and 659–675 (TSPTHPTTSPTHPTTSP). Residues 680–695 (VSPSTSLELATLSSPS) show a composition bias toward polar residues. Residues 858–867 (NEDEDEDNDV) are compositionally biased toward acidic residues. A phosphoserine mark is found at serine 874 and serine 875.

Belongs to the RIPOR family. Interacts (via N-terminus) with RHOA (GTP-bound form); this interaction links active RHOA to STK24 and STK26 kinases. Interacts with RHOB. Interacts with RHOC. Interacts (via C-terminus) with PDCD10; this interaction occurs in a Rho-independent manner. Interacts (via C-terminus) with STK24; this interaction occurs in a PDCD10-dependent and Rho-independent manner. Interacts (via C-terminus) with STK26; this interaction occurs in a PDCD10-dependent and Rho-independent manner. Interacts (via N-terminus) with 14-3-3 proteins; these interactions occur in a Rho-dependent manner.

The protein localises to the cytoplasm. It localises to the golgi apparatus. Downstream effector protein for Rho-type small GTPases that plays a role in cell polarity and directional migration. Acts as an adapter protein, linking active Rho proteins to STK24 and STK26 kinases, and hence positively regulates Golgi reorientation in polarized cell migration upon Rho activation. Involved in the subcellular relocation of STK26 from the Golgi to cytoplasm punctae in a Rho- and PDCD10-dependent manner upon serum stimulation. The protein is Rho family-interacting cell polarization regulator 1 (RIPOR1) of Homo sapiens (Human).